The primary structure comprises 477 residues: Cytochrome P450 716A1 (477 aa).

Residues 2-22 traverse the membrane as a helical segment; it reads YMAIMIILFLSSILLSLLLLL. Residue C424 coordinates heme.

Belongs to the cytochrome P450 family. It depends on heme as a cofactor.

The protein localises to the membrane. Possesses triterpene oxidizing activity. Catalyzes the C28 hydroxylation of alpha-amyrin, beta-amyrin, and lupeol, producing uvaol, erythrodiol, and betulin, respectively. Catalyzes the C28 carboxylation of alpha- and beta-amyrin. This Arabidopsis thaliana (Mouse-ear cress) protein is Cytochrome P450 716A1.